A 454-amino-acid chain; its full sequence is Bifunctional protein GlmU (454 aa).

The pyrophosphorylase stretch occupies residues 1–226; it reads MALNVVILAA…AIEVEGANNR (226 aa). UDP-N-acetyl-alpha-D-glucosamine is bound by residues 8-11, lysine 22, glutamine 73, 78-79, 100-102, glycine 137, glutamate 151, asparagine 166, and asparagine 224; these read LAAG, GT, and YGD. Residue aspartate 102 coordinates Mg(2+). Residue asparagine 224 coordinates Mg(2+). A linker region spans residues 227-247; it reads VQLAQLERAYQARAAEKLMLE. The N-acetyltransferase stretch occupies residues 248–454; sequence GANLRDPARI…GWPRPVKLKK (207 aa). UDP-N-acetyl-alpha-D-glucosamine contacts are provided by arginine 330 and lysine 348. The active-site Proton acceptor is histidine 360. Tyrosine 363 and asparagine 374 together coordinate UDP-N-acetyl-alpha-D-glucosamine. Residues alanine 377, 383 to 384, serine 402, alanine 420, and arginine 437 each bind acetyl-CoA; that span reads NY.

The protein in the N-terminal section; belongs to the N-acetylglucosamine-1-phosphate uridyltransferase family. It in the C-terminal section; belongs to the transferase hexapeptide repeat family. Homotrimer. Requires Mg(2+) as cofactor.

Its subcellular location is the cytoplasm. The catalysed reaction is alpha-D-glucosamine 1-phosphate + acetyl-CoA = N-acetyl-alpha-D-glucosamine 1-phosphate + CoA + H(+). It catalyses the reaction N-acetyl-alpha-D-glucosamine 1-phosphate + UTP + H(+) = UDP-N-acetyl-alpha-D-glucosamine + diphosphate. The protein operates within nucleotide-sugar biosynthesis; UDP-N-acetyl-alpha-D-glucosamine biosynthesis; N-acetyl-alpha-D-glucosamine 1-phosphate from alpha-D-glucosamine 6-phosphate (route II): step 2/2. It participates in nucleotide-sugar biosynthesis; UDP-N-acetyl-alpha-D-glucosamine biosynthesis; UDP-N-acetyl-alpha-D-glucosamine from N-acetyl-alpha-D-glucosamine 1-phosphate: step 1/1. It functions in the pathway bacterial outer membrane biogenesis; LPS lipid A biosynthesis. In terms of biological role, catalyzes the last two sequential reactions in the de novo biosynthetic pathway for UDP-N-acetylglucosamine (UDP-GlcNAc). The C-terminal domain catalyzes the transfer of acetyl group from acetyl coenzyme A to glucosamine-1-phosphate (GlcN-1-P) to produce N-acetylglucosamine-1-phosphate (GlcNAc-1-P), which is converted into UDP-GlcNAc by the transfer of uridine 5-monophosphate (from uridine 5-triphosphate), a reaction catalyzed by the N-terminal domain. This Shewanella woodyi (strain ATCC 51908 / MS32) protein is Bifunctional protein GlmU.